A 291-amino-acid polypeptide reads, in one-letter code: uncharacterized protein (291 aa).

Belongs to the PhyH family.

This is an uncharacterized protein from Mycobacterium bovis (strain ATCC BAA-935 / AF2122/97).